Reading from the N-terminus, the 28-residue chain is 3-phytase B (28 aa).

Residues R1 to K28 form a disordered region. Residue H17 is the Nucleophile of the active site.

It belongs to the histidine acid phosphatase family.

It carries out the reaction 1D-myo-inositol hexakisphosphate + H2O = 1D-myo-inositol 1,2,4,5,6-pentakisphosphate + phosphate. Catalyzes the hydrolysis of inorganic orthophosphate from phytate. This chain is 3-phytase B (phyB), found in Aspergillus ficuum.